A 200-amino-acid chain; its full sequence is Lipopolysaccharide core heptose(II)-phosphate phosphatase (200 aa).

The signal sequence occupies residues 1–25 (MLAFCRSSLKSKKYFIILLALAAIA).

Belongs to the phosphoglycerate mutase family. Ais subfamily.

Its subcellular location is the periplasm. The protein operates within bacterial outer membrane biogenesis; lipopolysaccharide metabolism. Its function is as follows. Catalyzes the dephosphorylation of heptose(II) of the outer membrane lipopolysaccharide core. In Escherichia coli O157:H7 (strain EC4115 / EHEC), this protein is Lipopolysaccharide core heptose(II)-phosphate phosphatase.